A 442-amino-acid chain; its full sequence is Small RNA 2'-O-methyltransferase (442 aa).

2 residues coordinate S-adenosyl-L-methionine: Gly125 and Asp151. Mg(2+)-binding residues include Glu209, Glu212, His213, and His260.

The protein belongs to the methyltransferase superfamily. HEN1 family. Requires Mg(2+) as cofactor. Broadly expressed in the germline and somatic tissues in both hermaphrodites and males.

Its subcellular location is the cytoplasm. It localises to the nucleus. The protein localises to the nucleoplasm. It is found in the cytoplasmic granule. It carries out the reaction small RNA 3'-end nucleotide + S-adenosyl-L-methionine = small RNA 3'-end 2'-O-methylnucleotide + S-adenosyl-L-homocysteine + H(+). In terms of biological role, methyltransferase that adds a 2'-O-methyl group at the 3'-end of PIWI-interacting RNAs (piRNAs) and small interfering RNAs (siRNAs) which are classes of regulatory RNAs that are involved in gene silencing in endogenous RNA interference (RNAi) pathways. Methylation protects the 3'-end of small RNAs from tailing and trimming and could constitute a recognition signal for appropriate argonaute machineries. Methylates and stabilizes 26G-siRNAs (a class of 26 nucleotide siRNAs that possess a monophosphorylated guanine residue at the 5'-end) when they are bound by argonaute protein ergo-1. This occurs in the female germline and embryo, but not in the male germline. Does not methylate 26G-siRNAs bound by argonaute proteins alg-3 or alg-4. Methylates and stabilizes 21U-piRNAs, which are a class of 21 nucleotide piRNAs that possess a uracil residue at the 5'-end, in the male and female germline. In addition, may play a role in exogenous RNAi (exoRNAi) pathways in the germline. The protein is Small RNA 2'-O-methyltransferase of Caenorhabditis elegans.